Here is a 145-residue protein sequence, read N- to C-terminus: Large ribosomal subunit protein bL17 (145 aa).

This sequence belongs to the bacterial ribosomal protein bL17 family. Part of the 50S ribosomal subunit. Contacts protein L32.

The protein is Large ribosomal subunit protein bL17 of Orientia tsutsugamushi (strain Ikeda) (Rickettsia tsutsugamushi).